The primary structure comprises 436 residues: GTPase Der (436 aa).

2 EngA-type G domains span residues 4–167 (PTVA…PVEE) and 175–351 (IRFS…ESQN). Residues 10–17 (GRPNVGKS), 57–61 (DTGGI), 119–122 (NKVD), 181–188 (GRPNVGKS), 229–233 (DTAGM), and 294–297 (NKWD) each bind GTP. The 85-residue stretch at 352-436 (KRIPSAVLND…PIHLIARKRK (85 aa)) folds into the KH-like domain.

Belongs to the TRAFAC class TrmE-Era-EngA-EngB-Septin-like GTPase superfamily. EngA (Der) GTPase family. As to quaternary structure, associates with the 50S ribosomal subunit.

Functionally, GTPase that plays an essential role in the late steps of ribosome biogenesis. The polypeptide is GTPase Der (Streptococcus pyogenes serotype M3 (strain ATCC BAA-595 / MGAS315)).